We begin with the raw amino-acid sequence, 389 residues long: Acetoin utilization protein AcuC (389 aa).

Belongs to the histone deacetylase family.

Its pathway is ketone degradation; acetoin degradation. In terms of biological role, role in growth on acetoin or butanediol. Involved in the breakdown of these compounds used as a carbon source. In Staphylococcus aureus (strain Mu50 / ATCC 700699), this protein is Acetoin utilization protein AcuC (acuC).